The sequence spans 210 residues: Protein LURP-one-related 5 (210 aa).

This sequence belongs to the LOR family.

Might be related to the phospholipid scramblase and tubby-like superfamily of membrane tethered transcription factors. The protein is Protein LURP-one-related 5 of Arabidopsis thaliana (Mouse-ear cress).